Reading from the N-terminus, the 223-residue chain is N-(5'-phosphoribosyl)anthranilate isomerase (223 aa).

The protein belongs to the TrpF family.

It catalyses the reaction N-(5-phospho-beta-D-ribosyl)anthranilate = 1-(2-carboxyphenylamino)-1-deoxy-D-ribulose 5-phosphate. It functions in the pathway amino-acid biosynthesis; L-tryptophan biosynthesis; L-tryptophan from chorismate: step 3/5. This chain is N-(5'-phosphoribosyl)anthranilate isomerase, found in Bradyrhizobium diazoefficiens (strain JCM 10833 / BCRC 13528 / IAM 13628 / NBRC 14792 / USDA 110).